We begin with the raw amino-acid sequence, 548 residues long: DNA ligase (548 aa).

An ATP-binding site is contributed by Glu252. The active-site N6-AMP-lysine intermediate is Lys254. ATP-binding residues include Arg259, Arg274, Glu303, Phe343, Arg414, and Lys420.

The protein belongs to the ATP-dependent DNA ligase family. The cofactor is Mg(2+).

The enzyme catalyses ATP + (deoxyribonucleotide)n-3'-hydroxyl + 5'-phospho-(deoxyribonucleotide)m = (deoxyribonucleotide)n+m + AMP + diphosphate.. Its function is as follows. DNA ligase that seals nicks in double-stranded DNA during DNA replication, DNA recombination and DNA repair. The sequence is that of DNA ligase from Natronomonas pharaonis (strain ATCC 35678 / DSM 2160 / CIP 103997 / JCM 8858 / NBRC 14720 / NCIMB 2260 / Gabara) (Halobacterium pharaonis).